Here is a 226-residue protein sequence, read N- to C-terminus: Peptidyl-prolyl cis-trans isomerase CYP23 (226 aa).

Positions Met1–Ala22 are cleaved as a signal peptide. Residues Val34–Tyr191 form the PPIase cyclophilin-type domain.

It belongs to the cyclophilin-type PPIase family. In terms of tissue distribution, ubiquitous. Lower expression in roots.

The protein resides in the endoplasmic reticulum. The catalysed reaction is [protein]-peptidylproline (omega=180) = [protein]-peptidylproline (omega=0). In terms of biological role, PPIases accelerate the folding of proteins. It catalyzes the cis-trans isomerization of proline imidic peptide bonds in oligopeptides. The sequence is that of Peptidyl-prolyl cis-trans isomerase CYP23 (CYP23) from Arabidopsis thaliana (Mouse-ear cress).